The following is a 125-amino-acid chain: Large ribosomal subunit protein bL12 (125 aa).

The protein belongs to the bacterial ribosomal protein bL12 family. As to quaternary structure, homodimer. Part of the ribosomal stalk of the 50S ribosomal subunit. Forms a multimeric L10(L12)X complex, where L10 forms an elongated spine to which 2 to 4 L12 dimers bind in a sequential fashion. Binds GTP-bound translation factors.

In terms of biological role, forms part of the ribosomal stalk which helps the ribosome interact with GTP-bound translation factors. Is thus essential for accurate translation. The protein is Large ribosomal subunit protein bL12 of Cereibacter sphaeroides (strain ATCC 17023 / DSM 158 / JCM 6121 / CCUG 31486 / LMG 2827 / NBRC 12203 / NCIMB 8253 / ATH 2.4.1.) (Rhodobacter sphaeroides).